Consider the following 789-residue polypeptide: Disintegrin and metalloproteinase domain-containing protein 1 (789 aa).

The first 68 residues, 1–68 (MSVAASASRS…LLIFLPSTLC (68 aa)), serve as a signal peptide directing secretion. Positions 238–432 (KYVEMFVVVN…HRGACLLDRP (195 aa)) constitute a Peptidase M12B domain. Asn-259 is a glycosylation site (N-linked (GlcNAc...) asparagine). Intrachain disulfides connect Cys-348–Cys-427, Cys-388–Cys-411, Cys-390–Cys-396, and Cys-497–Cys-517. A Zn(2+)-binding site is contributed by His-373. Glu-374 is a catalytic residue. Zn(2+) contacts are provided by His-377 and His-383. An N-linked (GlcNAc...) asparagine glycan is attached at Asn-410. Residues 441-525 (DAHCGNGVVE…ECPANSYMQD (85 aa)) form the Disintegrin domain. Asn-633 is a glycosylation site (N-linked (GlcNAc...) asparagine). Residues 666 to 700 (LQYDCHPQEMCHGNGVCNNFKHCHCDAGFSPPDCS) form the EGF-like domain. 3 disulfide bridges follow: Cys-670-Cys-682, Cys-676-Cys-688, and Cys-690-Cys-699. Asn-720 carries N-linked (GlcNAc...) asparagine glycosylation. Residues 743 to 763 (VVVLVVPIFLIVLLCCLMLIA) traverse the membrane as a helical segment. The Cytoplasmic portion of the chain corresponds to 764-789 (YLWSEVQEAVSPGSSSTTSSSESESD).

In terms of assembly, heterodimer with ADAM2/fertilin subunit beta.

It localises to the membrane. In terms of biological role, may be involved in sperm-egg fusion. This is Disintegrin and metalloproteinase domain-containing protein 1 (Adam1) from Rattus norvegicus (Rat).